The following is a 176-amino-acid chain: Translation initiation factor IF-3 (176 aa).

Belongs to the IF-3 family. Monomer.

Its subcellular location is the cytoplasm. Functionally, IF-3 binds to the 30S ribosomal subunit and shifts the equilibrium between 70S ribosomes and their 50S and 30S subunits in favor of the free subunits, thus enhancing the availability of 30S subunits on which protein synthesis initiation begins. This chain is Translation initiation factor IF-3, found in Nitratidesulfovibrio vulgaris (strain ATCC 29579 / DSM 644 / CCUG 34227 / NCIMB 8303 / VKM B-1760 / Hildenborough) (Desulfovibrio vulgaris).